We begin with the raw amino-acid sequence, 237 residues long: Ribonuclease PH (237 aa).

Phosphate contacts are provided by residues Arg86 and 124–126 (GTR).

This sequence belongs to the RNase PH family. Homohexameric ring arranged as a trimer of dimers.

It catalyses the reaction tRNA(n+1) + phosphate = tRNA(n) + a ribonucleoside 5'-diphosphate. In terms of biological role, phosphorolytic 3'-5' exoribonuclease that plays an important role in tRNA 3'-end maturation. Removes nucleotide residues following the 3'-CCA terminus of tRNAs; can also add nucleotides to the ends of RNA molecules by using nucleoside diphosphates as substrates, but this may not be physiologically important. Probably plays a role in initiation of 16S rRNA degradation (leading to ribosome degradation) during starvation. This Shewanella denitrificans (strain OS217 / ATCC BAA-1090 / DSM 15013) protein is Ribonuclease PH.